A 217-amino-acid polypeptide reads, in one-letter code: KS1 protein (217 aa).

Residues 1–16 form the signal peptide; it reads MKLIIVLVMMLVCVYS. Residues 24-47 are compositionally biased toward basic and acidic residues; that stretch reads PKNHEVPAKKQFAETKVEKKKRSD. Disordered regions lie at residues 24–58 and 72–205; these read PKNHEVPAKKQFAETKVEKKKRSDDGDEEICDDDD and EDDD…LKIK. Repeat copies occupy residues 32–81 and 98–147. Residues 32-147 are 2 X 50 AA approximate repeats; it reads KKQFAETKVE…EEDDDCYDED (116 aa). Acidic residues-rich tracts occupy residues 48–58 and 72–94; these read DGDEEICDDDD and EDDDDCVDGGETEECDEDDDDCQ. Positions 98–110 are enriched in basic residues; that stretch reads KKKKRETKPKLKK. A compositionally biased stretch (acidic residues) spans 114 to 145; sequence DEEEEECEEDDEDCEVEVDIEECDEEDDDCYD. The span at 149-188 shows a compositional bias: basic residues; that stretch reads KKKKENKLKKESKKKNSKKTVPKNAKKSSKRSTSTKKTSQ.

In terms of tissue distribution, expressed in tentacle-specific epithelial cells (battery cells) as well as in a small fraction of ectodermal epithelial cells in the gastric region subjacent to the tentacles (the tentacle formation region). The later cells are committed to become battery cells.

Functionally, responds to early signals of head formation in hydra. This is KS1 protein (KS1) from Hydra vulgaris (Hydra).